The primary structure comprises 270 residues: Shikimate dehydrogenase (NADP(+)) (270 aa).

Shikimate contacts are provided by residues 14-16 (SKS) and Thr-61. Lys-65 acts as the Proton acceptor in catalysis. Asn-86 and Asp-101 together coordinate shikimate. Residues 126–130 (GAGGA), 150–155 (NRTVDK), and Met-215 contribute to the NADP(+) site. Tyr-217 provides a ligand contact to shikimate. Gly-238 is an NADP(+) binding site.

It belongs to the shikimate dehydrogenase family. As to quaternary structure, homodimer.

The enzyme catalyses shikimate + NADP(+) = 3-dehydroshikimate + NADPH + H(+). The protein operates within metabolic intermediate biosynthesis; chorismate biosynthesis; chorismate from D-erythrose 4-phosphate and phosphoenolpyruvate: step 4/7. In terms of biological role, involved in the biosynthesis of the chorismate, which leads to the biosynthesis of aromatic amino acids. Catalyzes the reversible NADPH linked reduction of 3-dehydroshikimate (DHSA) to yield shikimate (SA). This chain is Shikimate dehydrogenase (NADP(+)), found in Methylobacillus flagellatus (strain ATCC 51484 / DSM 6875 / VKM B-1610 / KT).